The sequence spans 507 residues: Chromosomal replication initiator protein DnaA (507 aa).

Residues 1–112 (MTDDPGSGFT…PATDEADDTT (112 aa)) form a domain I, interacts with DnaA modulators region. A disordered region spans residues 99-162 (RIAPPATDEA…ERPRNTDSAT (64 aa)). Residues 113-127 (VPPSENPATTSPDTT) are compositionally biased toward polar residues. Residues 113-166 (VPPSENPATTSPDTTTDNDEIDDSAAARGDNQHSWPSYFTERPRNTDSATAGVT) are domain II. The tract at residues 167-383 (SLNRRYTFDT…GALIRVTAFA (217 aa)) is domain III, AAA+ region. ATP-binding residues include Gly-211, Gly-213, Lys-214, and Thr-215. The interval 384-507 (SLNKTPIDKA…TTRIRQRSKR (124 aa)) is domain IV, binds dsDNA.

It belongs to the DnaA family. Oligomerizes as a right-handed, spiral filament on DNA at oriC.

Its subcellular location is the cytoplasm. Its function is as follows. Plays an essential role in the initiation and regulation of chromosomal replication. ATP-DnaA binds to the origin of replication (oriC) to initiate formation of the DNA replication initiation complex once per cell cycle. Binds the DnaA box (a 9 base pair repeat at the origin) and separates the double-stranded (ds)DNA. Forms a right-handed helical filament on oriC DNA; dsDNA binds to the exterior of the filament while single-stranded (ss)DNA is stabiized in the filament's interior. The ATP-DnaA-oriC complex binds and stabilizes one strand of the AT-rich DNA unwinding element (DUE), permitting loading of DNA polymerase. After initiation quickly degrades to an ADP-DnaA complex that is not apt for DNA replication. Binds acidic phospholipids. The polypeptide is Chromosomal replication initiator protein DnaA (Mycobacterium bovis (strain ATCC BAA-935 / AF2122/97)).